Consider the following 408-residue polypeptide: MTSKGPEEEHPSVTLFRQYLRIRTVQPKPDYGAAVAFFEETARQLGLGCQKVEVAPGYVVTVLTWPGTNPTLSSILLNSHTDVVPVFKEHWSHDPFEAFKDSEGYIYARGAQDMKCVSIQYLEAVRRLKVEGHRFPRTIHMTFVPDEEVGGHQGMELFVQRPEFHALRAGFALDEGIANPTDAFTVFYSERSPWWVRVTSTGRPGHASRFMEDTAAEKLHKVVNSILAFREKEWQRLQSNPHLKEGSVTSVNLTKLEGGVAYNVIPATMSASFDFRVAPDVDFKAFEEQLQSWCQAAGEGVTLEFAQKWMHPQVTPTDDSNPWWAAFSRVCKDMNLTLEPEIMPAATDNRYIRAVGVPALGFSPMNRTPVLLHDHDERLHEAVFLRGVDIYTRLLPALASVPALPSDS.

His80 is a Zn(2+) binding site. Asp82 is a catalytic residue. Zn(2+) is bound at residue Asp113. The Proton acceptor role is filled by Glu147. Zn(2+) contacts are provided by Glu148, Glu175, and His373.

It belongs to the peptidase M20A family. In terms of assembly, homodimer. Interacts with SPHK1. Requires Zn(2+) as cofactor. Expression is highest in kidney, strong in brain and weaker in placenta and spleen.

The protein localises to the cytoplasm. It catalyses the reaction an N-acyl-L-amino acid + H2O = an L-alpha-amino acid + a carboxylate. The enzyme catalyses N-acetyl-L-methionine + H2O = L-methionine + acetate. It carries out the reaction N-acetyl-L-glutamine + H2O = L-glutamine + acetate. Functionally, catalyzes the hydrolysis of N-acetylated amino acids to acetate and free amino acids. The chain is Aminoacylase-1 (ACY1) from Homo sapiens (Human).